The chain runs to 673 residues: DNA ligase (673 aa).

NAD(+) contacts are provided by residues 35–39 (DAQYD), 84–85 (SL), and glutamate 115. Lysine 117 functions as the N6-AMP-lysine intermediate in the catalytic mechanism. Arginine 138, glutamate 178, lysine 294, and lysine 318 together coordinate NAD(+). Residues cysteine 412, cysteine 415, cysteine 430, and cysteine 435 each coordinate Zn(2+). Residues 594 to 673 (LQSDRLAGKS…DELHALLVDE (80 aa)) enclose the BRCT domain.

Belongs to the NAD-dependent DNA ligase family. LigA subfamily. Mg(2+) serves as cofactor. Requires Mn(2+) as cofactor.

The enzyme catalyses NAD(+) + (deoxyribonucleotide)n-3'-hydroxyl + 5'-phospho-(deoxyribonucleotide)m = (deoxyribonucleotide)n+m + AMP + beta-nicotinamide D-nucleotide.. Its function is as follows. DNA ligase that catalyzes the formation of phosphodiester linkages between 5'-phosphoryl and 3'-hydroxyl groups in double-stranded DNA using NAD as a coenzyme and as the energy source for the reaction. It is essential for DNA replication and repair of damaged DNA. The sequence is that of DNA ligase from Herpetosiphon aurantiacus (strain ATCC 23779 / DSM 785 / 114-95).